Here is a 155-residue protein sequence, read N- to C-terminus: Telokin-like protein 20 homolog (155 aa).

Residues Lys-109–Asp-155 are disordered.

The chain is Telokin-like protein 20 homolog from Orgyia pseudotsugata multicapsid polyhedrosis virus (OpMNPV).